The chain runs to 461 residues: Zinc finger protein ZFP2 (461 aa).

13 consecutive C2H2-type zinc fingers follow at residues 102–124 (YECN…QRIH), 130–152 (YKCN…QRIH), 158–180 (YKCN…QRTH), 186–208 (YQCK…ERIH), 214–236 (YKCN…QRTH), 242–264 (YECN…QRSH), 270–292 (YECS…QRNH), 298–320 (YKCN…QRLH), 326–348 (FECN…RRIH), 354–376 (YECM…QVIH), 382–404 (YECN…QRIH), 410–432 (YECD…QRTH), and 438–460 (YQCN…QRTH).

The protein belongs to the krueppel C2H2-type zinc-finger protein family.

The protein resides in the nucleus. Its function is as follows. Probable transcription factor involved in neuronal differentiation and/or phenotypic maintenance. This is Zinc finger protein ZFP2 (ZFP2) from Homo sapiens (Human).